The following is a 353-amino-acid chain: UDP-3-O-acylglucosamine N-acyltransferase (353 aa).

Histidine 242 (proton acceptor) is an active-site residue.

Belongs to the transferase hexapeptide repeat family. LpxD subfamily. Homotrimer.

The catalysed reaction is a UDP-3-O-[(3R)-3-hydroxyacyl]-alpha-D-glucosamine + a (3R)-hydroxyacyl-[ACP] = a UDP-2-N,3-O-bis[(3R)-3-hydroxyacyl]-alpha-D-glucosamine + holo-[ACP] + H(+). The protein operates within bacterial outer membrane biogenesis; LPS lipid A biosynthesis. Its function is as follows. Catalyzes the N-acylation of UDP-3-O-acylglucosamine using 3-hydroxyacyl-ACP as the acyl donor. Is involved in the biosynthesis of lipid A, a phosphorylated glycolipid that anchors the lipopolysaccharide to the outer membrane of the cell. The chain is UDP-3-O-acylglucosamine N-acyltransferase from Pseudomonas paraeruginosa (strain DSM 24068 / PA7) (Pseudomonas aeruginosa (strain PA7)).